We begin with the raw amino-acid sequence, 514 residues long: Peptide chain release factor 3 (514 aa).

The tr-type G domain maps to 8–268 (KKRRTFAIIS…TFLKFAPEPH (261 aa)). Residues 17 to 24 (SHPDAGKT), 85 to 89 (DTPGH), and 139 to 142 (NKLD) each bind GTP.

The protein belongs to the TRAFAC class translation factor GTPase superfamily. Classic translation factor GTPase family. PrfC subfamily.

Its subcellular location is the cytoplasm. Functionally, increases the formation of ribosomal termination complexes and stimulates activities of RF-1 and RF-2. It binds guanine nucleotides and has strong preference for UGA stop codons. It may interact directly with the ribosome. The stimulation of RF-1 and RF-2 is significantly reduced by GTP and GDP, but not by GMP. In Streptococcus pneumoniae serotype 19F (strain G54), this protein is Peptide chain release factor 3.